A 70-amino-acid chain; its full sequence is Cytochrome c oxidase subunit 8B, mitochondrial (70 aa).

A mitochondrion-targeting transit peptide spans Met-1–His-24. Residues Val-25–Ser-35 lie on the Mitochondrial matrix side of the membrane. A helical membrane pass occupies residues Pro-36–Ser-59. The Mitochondrial intermembrane segment spans residues His-60–Ala-70.

Belongs to the cytochrome c oxidase VIII family. In terms of assembly, component of the cytochrome c oxidase (complex IV, CIV), a multisubunit enzyme composed of 14 subunits. The complex is composed of a catalytic core of 3 subunits MT-CO1, MT-CO2 and MT-CO3, encoded in the mitochondrial DNA, and 11 supernumerary subunits COX4I, COX5A, COX5B, COX6A, COX6B, COX6C, COX7A, COX7B, COX7C, COX8 and NDUFA4, which are encoded in the nuclear genome. The complex exists as a monomer or a dimer and forms supercomplexes (SCs) in the inner mitochondrial membrane with NADH-ubiquinone oxidoreductase (complex I, CI) and ubiquinol-cytochrome c oxidoreductase (cytochrome b-c1 complex, complex III, CIII), resulting in different assemblies (supercomplex SCI(1)III(2)IV(1) and megacomplex MCI(2)III(2)IV(2)).

The protein localises to the mitochondrion inner membrane. The protein operates within energy metabolism; oxidative phosphorylation. Its function is as follows. Component of the cytochrome c oxidase, the last enzyme in the mitochondrial electron transport chain which drives oxidative phosphorylation. The respiratory chain contains 3 multisubunit complexes succinate dehydrogenase (complex II, CII), ubiquinol-cytochrome c oxidoreductase (cytochrome b-c1 complex, complex III, CIII) and cytochrome c oxidase (complex IV, CIV), that cooperate to transfer electrons derived from NADH and succinate to molecular oxygen, creating an electrochemical gradient over the inner membrane that drives transmembrane transport and the ATP synthase. Cytochrome c oxidase is the component of the respiratory chain that catalyzes the reduction of oxygen to water. Electrons originating from reduced cytochrome c in the intermembrane space (IMS) are transferred via the dinuclear copper A center (CU(A)) of subunit 2 and heme A of subunit 1 to the active site in subunit 1, a binuclear center (BNC) formed by heme A3 and copper B (CU(B)). The BNC reduces molecular oxygen to 2 water molecules using 4 electrons from cytochrome c in the IMS and 4 protons from the mitochondrial matrix. The sequence is that of Cytochrome c oxidase subunit 8B, mitochondrial (COX8B) from Ateles belzebuth (White-bellied spider monkey).